Consider the following 305-residue polypeptide: Protoheme IX farnesyltransferase (305 aa).

Helical transmembrane passes span 28–48 (VVLLMLLTAIVGMCLASPGIV), 52–72 (VFLFGNLGIALAASSAAAINH), 102–122 (IFAAILCILSMIILIAFVNLL), 123–143 (TALLTFITLIGYAGFYTLYLK), 150–170 (IVIGGLAGAAPPLLGWVAVTG), 176–196 (ALILLLIIFLWTPPHFWALAI), 221–241 (INILLYTLLLTAISFLPFVIM), 243–263 (SGWIYFSSVCLLNLGFLYWAI), and 282–302 (IWYLMLLFTALLVDHYVYLAL).

This sequence belongs to the UbiA prenyltransferase family. Protoheme IX farnesyltransferase subfamily.

The protein localises to the cell inner membrane. It catalyses the reaction heme b + (2E,6E)-farnesyl diphosphate + H2O = Fe(II)-heme o + diphosphate. Its pathway is porphyrin-containing compound metabolism; heme O biosynthesis; heme O from protoheme: step 1/1. Converts heme B (protoheme IX) to heme O by substitution of the vinyl group on carbon 2 of heme B porphyrin ring with a hydroxyethyl farnesyl side group. The protein is Protoheme IX farnesyltransferase of Coxiella burnetii (strain CbuK_Q154) (Coxiella burnetii (strain Q154)).